The chain runs to 336 residues: Sulfate/thiosulfate import ATP-binding protein CysA (336 aa).

Residues 3-233 (ITIENVSKSF…PASPFVMSFI (231 aa)) enclose the ABC transporter domain. 35–42 (GPSGSGKS) serves as a coordination point for ATP.

It belongs to the ABC transporter superfamily. Sulfate/tungstate importer (TC 3.A.1.6) family. In terms of assembly, the complex is composed of two ATP-binding proteins (CysA), two transmembrane proteins (CysT and CysW) and a solute-binding protein (CysP).

Its subcellular location is the cell inner membrane. The enzyme catalyses sulfate(out) + ATP + H2O = sulfate(in) + ADP + phosphate + H(+). It carries out the reaction thiosulfate(out) + ATP + H2O = thiosulfate(in) + ADP + phosphate + H(+). Its function is as follows. Part of the ABC transporter complex CysAWTP involved in sulfate/thiosulfate import. Responsible for energy coupling to the transport system. The chain is Sulfate/thiosulfate import ATP-binding protein CysA from Thermosynechococcus vestitus (strain NIES-2133 / IAM M-273 / BP-1).